The primary structure comprises 123 residues: Small ribosomal subunit protein uS12 (123 aa).

Residue aspartate 89 is modified to 3-methylthioaspartic acid. The disordered stretch occupies residues 100–123; sequence GSLDTSGVKDRKQGRSKYGAKRPK. A compositionally biased stretch (basic residues) spans 113 to 123; the sequence is GRSKYGAKRPK.

Belongs to the universal ribosomal protein uS12 family. Part of the 30S ribosomal subunit. Contacts proteins S8 and S17. May interact with IF1 in the 30S initiation complex.

Functionally, with S4 and S5 plays an important role in translational accuracy. Interacts with and stabilizes bases of the 16S rRNA that are involved in tRNA selection in the A site and with the mRNA backbone. Located at the interface of the 30S and 50S subunits, it traverses the body of the 30S subunit contacting proteins on the other side and probably holding the rRNA structure together. The combined cluster of proteins S8, S12 and S17 appears to hold together the shoulder and platform of the 30S subunit. The polypeptide is Small ribosomal subunit protein uS12 (Pseudomonas aeruginosa (strain LESB58)).